The primary structure comprises 103 residues: Large ribosomal subunit protein bL21 (103 aa).

The protein belongs to the bacterial ribosomal protein bL21 family. In terms of assembly, part of the 50S ribosomal subunit. Contacts protein L20.

Functionally, this protein binds to 23S rRNA in the presence of protein L20. The protein is Large ribosomal subunit protein bL21 of Cupriavidus pinatubonensis (strain JMP 134 / LMG 1197) (Cupriavidus necator (strain JMP 134)).